Here is a 317-residue protein sequence, read N- to C-terminus: Universal stress protein Mb2019 (317 aa).

ATP is bound by residues G13, 128–134 (GYRGQGA), 142–143 (SV), G175, D208, 277–283 (GSHGRGG), and 291–293 (SVS).

Belongs to the universal stress protein A family.

The protein is Universal stress protein Mb2019 of Mycobacterium bovis (strain ATCC BAA-935 / AF2122/97).